The following is a 747-amino-acid chain: MEYTHQSSWIIPFTPLPVPILIGVGLLLFPTATKNLRRMWAFPSIFLLIIVMIFSVDLSIHQIKNSSIYQYVWSWTINTDLSLEFGYLIDSLTSIMSILITTVGILVLIYSDNYMSHDQGYLRFFAYLSFFNTSMLGLVTSSNLIQVYIFWELVGMCSYLLIGFWFTRPIAANACQKAFVTNRVGDFGLLLGILGLYWITGSLEFRDLFQIINNLIDQNEVNIFFITLCALLLFCGSVAKSAQFPLHVWLPDAMEGPTPISALIHAATMVAAGIFLVARLLPFFIAIPSIMNGIAFIGIITVVLGATLAIAQKDIKKNLAYSTMSQLGYMMLALGMGSYRIALFHLITHAYSKALLFLGSGSIIHSMEAIVGYSPNKSQNMLLMGGLTKHVPITKTAFLIGTLSLCGIPPFACFWSKDEILNDSWLYSPIFAIIACSTAGLTAFYMFRIYLLVFEGYFNVHFQNFNGKKNSSFYSISLWGKEGKKKLKNKIHLLSLLTMNNNERTSLFRKRAYLSKINRNVKSITRLFIHSTYFGTKKFPCFYPHESDNTMLFSMLVLVLFTFFVGAIGISFNQEGIDLDILSKLLSPSIDLLHQNSNKSVDWYEFFTNATFSVSIAFFGIFIASFFYKPVYSTLQNLNLLNLFEKNLTKNILADTIINGIYDWSYNRGYIDGFYEISLIASVRKLAKLNSFFDRQVIDGIPNAVGITSFLIGEAFKYVGSGRISSYILFFVFFVLLFLIIFYSFFI.

The next 16 helical transmembrane spans lie at 9–29 (WIIPFTPLPVPILIGVGLLLF), 40–60 (WAFPSIFLLIIVMIFSVDLSI), 89–109 (IDSLTSIMSILITTVGILVLI), 125–145 (FAYLSFFNTSMLGLVTSSNLI), 147–167 (VYIFWELVGMCSYLLIGFWFT), 185–205 (GDFGLLLGILGLYWITGSLEF), 219–239 (NEVNIFFITLCALLLFCGSVA), 258–278 (TPISALIHAATMVAAGIFLVA), 280–300 (LLPFFIAIPSIMNGIAFIGII), 327–347 (LGYMMLALGMGSYRIALFHLI), 354–374 (ALLFLGSGSIIHSMEAIVGYS), 396–416 (TAFLIGTLSLCGIPPFACFWS), 425–445 (WLYSPIFAIIACSTAGLTAFY), 552–572 (LFSMLVLVLFTFFVGAIGISF), 606–626 (FFTNATFSVSIAFFGIFIASF), and 727–747 (YILFFVFFVLLFLIIFYSFFI).

This sequence belongs to the complex I subunit 5 family. As to quaternary structure, NDH is composed of at least 16 different subunits, 5 of which are encoded in the nucleus.

Its subcellular location is the plastid. The protein localises to the chloroplast thylakoid membrane. The catalysed reaction is a plastoquinone + NADH + (n+1) H(+)(in) = a plastoquinol + NAD(+) + n H(+)(out). It catalyses the reaction a plastoquinone + NADPH + (n+1) H(+)(in) = a plastoquinol + NADP(+) + n H(+)(out). In terms of biological role, NDH shuttles electrons from NAD(P)H:plastoquinone, via FMN and iron-sulfur (Fe-S) centers, to quinones in the photosynthetic chain and possibly in a chloroplast respiratory chain. The immediate electron acceptor for the enzyme in this species is believed to be plastoquinone. Couples the redox reaction to proton translocation, and thus conserves the redox energy in a proton gradient. The protein is NAD(P)H-quinone oxidoreductase subunit 5, chloroplastic (ndhF) of Lotus japonicus (Lotus corniculatus var. japonicus).